The following is a 133-amino-acid chain: MAYRKMLKSKIHRACVTQADLDYEGSITISPELLKVANILPYEAVNVWNITAGTRFETYAITGEKGSTDICVNGAAAHLVTPGDLVIIASFTQILEEDCAAHEPTVVFVDQFNRLKEIRPERIGVKSRIPYPA.

S26 (schiff-base intermediate with substrate; via pyruvic acid) is an active-site residue. Pyruvic acid (Ser) is present on S26. Residue T58 coordinates substrate. The active-site Proton donor is the Y59. 74–76 provides a ligand contact to substrate; it reads GAA.

It belongs to the PanD family. Heterooctamer of four alpha and four beta subunits. Pyruvate serves as cofactor. Is synthesized initially as an inactive proenzyme, which is activated by self-cleavage at a specific serine bond to produce a beta-subunit with a hydroxyl group at its C-terminus and an alpha-subunit with a pyruvoyl group at its N-terminus.

The protein localises to the cytoplasm. It carries out the reaction L-aspartate + H(+) = beta-alanine + CO2. The protein operates within cofactor biosynthesis; (R)-pantothenate biosynthesis; beta-alanine from L-aspartate: step 1/1. In terms of biological role, catalyzes the pyruvoyl-dependent decarboxylation of aspartate to produce beta-alanine. The sequence is that of Aspartate 1-decarboxylase from Legionella pneumophila (strain Paris).